The following is a 581-amino-acid chain: Proline--tRNA ligase (581 aa).

The protein belongs to the class-II aminoacyl-tRNA synthetase family. ProS type 1 subfamily. In terms of assembly, homodimer.

The protein localises to the cytoplasm. The enzyme catalyses tRNA(Pro) + L-proline + ATP = L-prolyl-tRNA(Pro) + AMP + diphosphate. Its function is as follows. Catalyzes the attachment of proline to tRNA(Pro) in a two-step reaction: proline is first activated by ATP to form Pro-AMP and then transferred to the acceptor end of tRNA(Pro). As ProRS can inadvertently accommodate and process non-cognate amino acids such as alanine and cysteine, to avoid such errors it has two additional distinct editing activities against alanine. One activity is designated as 'pretransfer' editing and involves the tRNA(Pro)-independent hydrolysis of activated Ala-AMP. The other activity is designated 'posttransfer' editing and involves deacylation of mischarged Ala-tRNA(Pro). The misacylated Cys-tRNA(Pro) is not edited by ProRS. The protein is Proline--tRNA ligase of Rhodococcus erythropolis (strain PR4 / NBRC 100887).